Consider the following 568-residue polypeptide: MAEQTNTPDLKPRSRDVTDGLERTAARGMLRAVGMGDDDWEKPQIGVASSWNEITPCNLSLDRLAQGCKDGVFAAGGFPMQFGTISVSDGISMGHEGMHFSLVSREVIADSVETVMQAERLDGSVLLAGCDKSLPGMLMAAARLDLASVFLYAGSILPGIAKLSDGTEREVTIIDAFEAVGACARGLMSRADVDAIERAICPGEGACGGMYTANTMASAAEALGMSLPGSAAPPATDRRRDGYARRSGQAVVELLRRGITARDILTKEAFENAIAVVMAFGGSTNAVLHLLAIAHEARVELTLDDFARVGRRVPHLADVKPFGAHVMTDVDRIGGVPVMMKTLLDAGLLHGDCLTVTGRTVAENLAHIAPPDPDGKVVRALNDPIHPTGGITILSGSLAPGGAVVKSAGFDEDVFTGTARVFDRERAAMDALEDGTITAGDVVVIRYEGPKGGPGMREMLAITAAIKGAGLGKDVLLLTDGRFSGGTTGLCVGHVAPEAVDGGPIAFVRDGDRIRLDVAAGTLDLLVEPAELERRKQDWRPLPPRYTRGVLAKYTKLVGSASVGAVCD.

A disordered region spans residues 1–22; it reads MAEQTNTPDLKPRSRDVTDGLE. Residues 10–22 show a composition bias toward basic and acidic residues; that stretch reads LKPRSRDVTDGLE. Position 57 (Cys57) interacts with [2Fe-2S] cluster. Mg(2+) is bound at residue Asp89. Position 130 (Cys130) interacts with [2Fe-2S] cluster. The Mg(2+) site is built by Asp131 and Lys132. The residue at position 132 (Lys132) is an N6-carboxylysine. Cys207 provides a ligand contact to [2Fe-2S] cluster. Glu458 serves as a coordination point for Mg(2+). Ser484 functions as the Proton acceptor in the catalytic mechanism.

Belongs to the IlvD/Edd family. Homodimer. Requires [2Fe-2S] cluster as cofactor. It depends on Mg(2+) as a cofactor.

It carries out the reaction (2R)-2,3-dihydroxy-3-methylbutanoate = 3-methyl-2-oxobutanoate + H2O. The enzyme catalyses (2R,3R)-2,3-dihydroxy-3-methylpentanoate = (S)-3-methyl-2-oxopentanoate + H2O. Its pathway is amino-acid biosynthesis; L-isoleucine biosynthesis; L-isoleucine from 2-oxobutanoate: step 3/4. It participates in amino-acid biosynthesis; L-valine biosynthesis; L-valine from pyruvate: step 3/4. Its function is as follows. Functions in the biosynthesis of branched-chain amino acids. Catalyzes the dehydration of (2R,3R)-2,3-dihydroxy-3-methylpentanoate (2,3-dihydroxy-3-methylvalerate) into 2-oxo-3-methylpentanoate (2-oxo-3-methylvalerate) and of (2R)-2,3-dihydroxy-3-methylbutanoate (2,3-dihydroxyisovalerate) into 2-oxo-3-methylbutanoate (2-oxoisovalerate), the penultimate precursor to L-isoleucine and L-valine, respectively. The polypeptide is Dihydroxy-acid dehydratase 1 (Nocardia farcinica (strain IFM 10152)).